We begin with the raw amino-acid sequence, 387 residues long: MSYRPYQQIERRKSRQIHVGKVAVGGDAPISVQTMTNTLTTDAEATIAQIRRAELAGVDIVRVSCPDQESTIALKEIVREVNVPIVADIHFHYRRAIEAAEAGAACLRINPGNIGSAERVREVVKAARDHGCAIRIGVNAGSLERHLLEKYGEPNPDALVESALEHAKILQDHDFHEFKISVKASDVFLAVAAYQQLAEVCDHPLHIGITEAGGRRTGTVKSAIGLGNLLWAGVGDTMRVSLSAEPEEEVHVGWEILKGLGLRHRGVKIISCPSCARQGFNVIETVAALEERLAHIQTPLTLSIIGCVVNGPGEALMTDIGLTGGGGGRHMIYNAGKTDHTIAADGMVDHIVTLVEEKAARIVEEEAAAKAAAEQAAQEAALQHETV.

Positions 272, 275, 307, and 314 each coordinate [4Fe-4S] cluster.

Belongs to the IspG family. Requires [4Fe-4S] cluster as cofactor.

The enzyme catalyses (2E)-4-hydroxy-3-methylbut-2-enyl diphosphate + oxidized [flavodoxin] + H2O + 2 H(+) = 2-C-methyl-D-erythritol 2,4-cyclic diphosphate + reduced [flavodoxin]. Its pathway is isoprenoid biosynthesis; isopentenyl diphosphate biosynthesis via DXP pathway; isopentenyl diphosphate from 1-deoxy-D-xylulose 5-phosphate: step 5/6. Converts 2C-methyl-D-erythritol 2,4-cyclodiphosphate (ME-2,4cPP) into 1-hydroxy-2-methyl-2-(E)-butenyl 4-diphosphate. The sequence is that of 4-hydroxy-3-methylbut-2-en-1-yl diphosphate synthase (flavodoxin) from Granulibacter bethesdensis (strain ATCC BAA-1260 / CGDNIH1).